Reading from the N-terminus, the 404-residue chain is Odorant receptor 74a (404 aa).

Residues 1–38 (MSFHRYRPRLPGGELAPMPWPVSLYRVLNHVAWPLEAE) lie on the Cytoplasmic side of the membrane. The chain crosses the membrane as a helical span at residues 39–59 (SGRWTVFLDRLMIFLGFLVFC). Residues 60–67 (EHNEVDFH) lie on the Extracellular side of the membrane. Residues 68-88 (YLIANRQDMDNMLTGLPTYLI) traverse the membrane as a helical segment. At 89 to 141 (LVEMQIRCFQLAWHKDRFRALLQRFYAEIYVSEEMEPHLFASIQRQMLATRVN) the chain is on the cytoplasmic side. The helical transmembrane segment at 142–162 (STVYLLALLNFFLVPVTNVIY) threads the bilayer. Over 163–181 (HRREMLYKQVYPFDNTQLH) the chain is Extracellular. Residues 182–202 (FFIPLLVLNFWVGFIITSMLF) form a helical membrane-spanning segment. Topologically, residues 203 to 274 (GELNVMGELM…QRVEKEFTLR (72 aa)) are cytoplasmic. The chain crosses the membrane as a helical span at residues 275–295 (IFVMFAFSAGLLCALFFKAFT). At 296–303 (NPWGNVAY) the chain is on the extracellular side. The helical transmembrane segment at 304–324 (IVWFLAKFMELLALGMLGSIL) threads the bilayer. The Cytoplasmic segment spans residues 325–380 (LKTTDELGMMYYTADWEQVIHQSDNVGENVKLMKLVTLAIQLNSRPFFITGLNYFR). A helical transmembrane segment spans residues 381–401 (VSLTAVLKIIQGAFSYFTFLN). The Extracellular portion of the chain corresponds to 402-404 (SMR).

It belongs to the insect chemoreceptor superfamily. Heteromeric odorant receptor channel (TC 1.A.69) family. Or1a subfamily. In terms of assembly, interacts with Orco. Complexes exist early in the endomembrane system in olfactory sensory neurons (OSNs), coupling these complexes to the conserved ciliary trafficking pathway.

Its subcellular location is the cell membrane. In terms of biological role, odorant receptor which mediates acceptance or avoidance behavior, depending on its substrates. The odorant receptor repertoire encodes a large collection of odor stimuli that vary widely in identity, intensity, and duration. May form a complex with Orco to form odorant-sensing units, providing sensitive and prolonged odorant signaling and calcium permeability. Involved in the behavioral responses to octanol, anisole, and 2-heptanone. The sequence is that of Odorant receptor 74a (Or74a) from Drosophila melanogaster (Fruit fly).